A 58-amino-acid polypeptide reads, in one-letter code: Large ribosomal subunit protein bL32 (58 aa).

The span at 1–19 (MAVPKKRTSKSKKNMRKAN) shows a compositional bias: basic residues. Residues 1–58 (MAVPKKRTSKSKKNMRKANWKNQAKLAAKKALSLGKSVETQRSHSFVHPRYEEEEEED) are disordered. Over residues 20-32 (WKNQAKLAAKKAL) the composition is skewed to low complexity.

Belongs to the bacterial ribosomal protein bL32 family.

The sequence is that of Large ribosomal subunit protein bL32 from Trichodesmium erythraeum (strain IMS101).